Reading from the N-terminus, the 205-residue chain is ATP synthase subunit b (205 aa).

Residues 45–65 traverse the membrane as a helical segment; it reads LGMTATAWVSLAMVIVILLLL.

This sequence belongs to the ATPase B chain family. F-type ATPases have 2 components, F(1) - the catalytic core - and F(0) - the membrane proton channel. F(1) has five subunits: alpha(3), beta(3), gamma(1), delta(1), epsilon(1). F(0) has three main subunits: a(1), b(2) and c(10-14). The alpha and beta chains form an alternating ring which encloses part of the gamma chain. F(1) is attached to F(0) by a central stalk formed by the gamma and epsilon chains, while a peripheral stalk is formed by the delta and b chains.

The protein resides in the cell inner membrane. F(1)F(0) ATP synthase produces ATP from ADP in the presence of a proton or sodium gradient. F-type ATPases consist of two structural domains, F(1) containing the extramembraneous catalytic core and F(0) containing the membrane proton channel, linked together by a central stalk and a peripheral stalk. During catalysis, ATP synthesis in the catalytic domain of F(1) is coupled via a rotary mechanism of the central stalk subunits to proton translocation. In terms of biological role, component of the F(0) channel, it forms part of the peripheral stalk, linking F(1) to F(0). The chain is ATP synthase subunit b from Rhizorhabdus wittichii (strain DSM 6014 / CCUG 31198 / JCM 15750 / NBRC 105917 / EY 4224 / RW1) (Sphingomonas wittichii).